The primary structure comprises 164 residues: Transcription elongation factor GreA (164 aa).

A coiled-coil region spans residues 50–76; that stretch reads YHAAREEQGQQEARIRQLQDLLSNAKV.

Belongs to the GreA/GreB family.

Necessary for efficient RNA polymerase transcription elongation past template-encoded arresting sites. The arresting sites in DNA have the property of trapping a certain fraction of elongating RNA polymerases that pass through, resulting in locked ternary complexes. Cleavage of the nascent transcript by cleavage factors such as GreA or GreB allows the resumption of elongation from the new 3'terminus. GreA releases sequences of 2 to 3 nucleotides. In Mycobacterium bovis (strain ATCC BAA-935 / AF2122/97), this protein is Transcription elongation factor GreA.